Consider the following 194-residue polypeptide: Holliday junction branch migration complex subunit RuvA (194 aa).

Residues 1 to 64 (MIARLSGILV…EDAQLLYGFG (64 aa)) are domain I. A domain II region spans residues 65-141 (SDQERATFRQ…FAIDGGTALA (77 aa)). A flexible linker region spans residues 141–144 (AGSN). The tract at residues 145-194 (PAKSASSDVLNALLALGYNEREALAAVKQLPADIAVAEGIKLSLKSLSKT) is domain III.

Belongs to the RuvA family. In terms of assembly, homotetramer. Forms an RuvA(8)-RuvB(12)-Holliday junction (HJ) complex. HJ DNA is sandwiched between 2 RuvA tetramers; dsDNA enters through RuvA and exits via RuvB. An RuvB hexamer assembles on each DNA strand where it exits the tetramer. Each RuvB hexamer is contacted by two RuvA subunits (via domain III) on 2 adjacent RuvB subunits; this complex drives branch migration. In the full resolvosome a probable DNA-RuvA(4)-RuvB(12)-RuvC(2) complex forms which resolves the HJ.

Its subcellular location is the cytoplasm. In terms of biological role, the RuvA-RuvB-RuvC complex processes Holliday junction (HJ) DNA during genetic recombination and DNA repair, while the RuvA-RuvB complex plays an important role in the rescue of blocked DNA replication forks via replication fork reversal (RFR). RuvA specifically binds to HJ cruciform DNA, conferring on it an open structure. The RuvB hexamer acts as an ATP-dependent pump, pulling dsDNA into and through the RuvAB complex. HJ branch migration allows RuvC to scan DNA until it finds its consensus sequence, where it cleaves and resolves the cruciform DNA. The sequence is that of Holliday junction branch migration complex subunit RuvA from Methylobacillus flagellatus (strain ATCC 51484 / DSM 6875 / VKM B-1610 / KT).